Consider the following 460-residue polypeptide: Biphenyl 2,3-dioxygenase subunit alpha (460 aa).

The 110-residue stretch at 56 to 165 (WLLMGHETQI…VETYKGLIFA (110 aa)) folds into the Rieske domain. [2Fe-2S] cluster is bound by residues Cys-98, His-100, Cys-118, and His-121. Residue 217–230 (QFCSDMYHAGTTSH) participates in substrate binding. The Fe cation site is built by His-224, His-230, and Asp-378.

It belongs to the bacterial ring-hydroxylating dioxygenase alpha subunit family. Heterohexamer consisting of three BphA1 subunits and three BphA2 subunits. The multicomponent biphenyl dioxygenase system is composed of a ferredoxin reductase (BphA4), a ferredoxin (BphA3), and a terminal oxygenase (BphA1A2). It depends on [2Fe-2S] cluster as a cofactor. The cofactor is Fe cation.

It catalyses the reaction biphenyl + NADH + O2 + H(+) = (2R,3S)-3-phenylcyclohexa-3,5-diene-1,2-diol + NAD(+). Its pathway is xenobiotic degradation; biphenyl degradation; 2-hydroxy-2,4-pentadienoate and benzoate from biphenyl: step 1/4. Its function is as follows. Part of the oxygenase component of the biphenyl dioxygenase system that catalyzes the stereospecific dihydroxylation of the aromatic ring of biphenyl, yielding a dihydrodiol compound. Is essential for biphenyl degradation and growth of Rhodococcus sp. strain RHA1 on biphenyl as the sole source of carbon and energy. Can also use naphtalene and 4-chlorobiphenyl (4-CB) as substrates, as well as some polychlorinated biphenyls (PCB) such as 2,2'-dichlorobiphenyl, 2,3-dichlorobiphenyl and 2,5,2'-trichlorobiphenyl. Exhibits weak activity toward dibenzofuran and dibenzo-p-dioxin. Electrons are transferred from NADH to the [2Fe-2S] cluster in BphA1 via FAD of BphA4 and [2Fe-2S] cluster of BphA3. This Rhodococcus jostii (strain RHA1) protein is Biphenyl 2,3-dioxygenase subunit alpha.